The sequence spans 246 residues: Salivary antigen SP32 (246 aa).

The first 23 residues, 1 to 23 (MSGHILTVGLIVVVAHCATLSSS), serve as a signal peptide directing secretion. The tract at residues 51 to 160 (DKFYPDISDD…PDLSKYKNSP (110 aa)) is disordered. Residues 65–78 (VVRDNGRKGGDRGR) are compositionally biased toward basic and acidic residues. Positions 79-124 (QSTPSGKESHPSATQTGGRRPSQSPCGESRPSGSATSGRRPSQSPR) are enriched in polar residues. Positions 141 to 155 (QQDRRQNKKQPDLSK) are enriched in basic and acidic residues.

As to quaternary structure, interacts with human DSG1. Interacts with human DSG3. In terms of tissue distribution, salivary gland (at protein level).

It is found in the secreted. Its function is as follows. Down-regulates the expression of CD86 and HLA-DR on the surface of lipopolysaccharide (LPS)-stimulated human peripheral blood mononuclear cells (PBMCs). Reduces LPS-induced secretion of IL-1beta/IL1B in human PBMCs. Reduces LPS-induced secretion of various cytokines, such as IL-1beta, TNF-alpha/TNF, MCP-1/CCL2, IL6, IL27 and IL-1alpha/IL1A, in host cultured macrophages probably via inhibition of NF-kappa-B signaling pathway. Reduces production of IFN-gamma/IFNG, IL4 and IL6 in human lymphocytes activated with PMA/ionomycin. Exhibits anti-inflammatory activity in carrageenan-induced paw edema model in rats. The polypeptide is Salivary antigen SP32 (Phlebotomus papatasi (Sandfly)).